We begin with the raw amino-acid sequence, 349 residues long: Protein-glutamate methylesterase/protein-glutamine glutaminase 1 (349 aa).

One can recognise a Response regulatory domain in the interval 4–119 (RILVVDDSAV…KGFLEDSARR (116 aa)). 4-aspartylphosphate is present on aspartate 53. The region spanning 159–349 (PRAGRAELVV…VASAVLAWAR (191 aa)) is the CheB-type methylesterase domain. Residues serine 172, histidine 198, and aspartate 293 contribute to the active site.

The protein belongs to the CheB family. In terms of processing, phosphorylated by CheA. Phosphorylation of the N-terminal regulatory domain activates the methylesterase activity.

The protein localises to the cytoplasm. It carries out the reaction [protein]-L-glutamate 5-O-methyl ester + H2O = L-glutamyl-[protein] + methanol + H(+). The enzyme catalyses L-glutaminyl-[protein] + H2O = L-glutamyl-[protein] + NH4(+). Functionally, involved in chemotaxis. Part of a chemotaxis signal transduction system that modulates chemotaxis in response to various stimuli. Catalyzes the demethylation of specific methylglutamate residues introduced into the chemoreceptors (methyl-accepting chemotaxis proteins or MCP) by CheR. Also mediates the irreversible deamidation of specific glutamine residues to glutamic acid. This is Protein-glutamate methylesterase/protein-glutamine glutaminase 1 from Anaeromyxobacter dehalogenans (strain 2CP-C).